The primary structure comprises 146 residues: Dihydroneopterin aldolase 1 (146 aa).

Residues E41, Y73, and 92–93 (LE) contribute to the substrate site. K119 serves as the catalytic Proton donor/acceptor.

The protein belongs to the DHNA family. Homooctamer. Forms a hollow cylinder assembled from two ring-shaped tetramers. In terms of tissue distribution, expressed in roots, leaves, stems and siliques.

It catalyses the reaction 7,8-dihydroneopterin = 6-hydroxymethyl-7,8-dihydropterin + glycolaldehyde. The protein operates within cofactor biosynthesis; tetrahydrofolate biosynthesis; 2-amino-4-hydroxy-6-hydroxymethyl-7,8-dihydropteridine diphosphate from 7,8-dihydroneopterin triphosphate: step 3/4. Catalyzes the conversion of 7,8-dihydroneopterin into 6-hydroxymethyl-7,8-dihydropterin, a biosynthetic precursor of the vitamin tetrahydrofolate. Can use L-threo-dihydroneopterin and D-erythro-dihydroneopterin as substrates for the formation of 6-hydroxymethyldihydropterin, but it can also catalyze the epimerization of carbon 2' of dihydroneopterin and dihydromonapterin. The protein is Dihydroneopterin aldolase 1 of Arabidopsis thaliana (Mouse-ear cress).